The primary structure comprises 179 residues: Putative FBD-associated F-box protein At3g12840 (179 aa).

The F-box domain maps to 14-60 (AARINDLPDDLLATVLSFVPTKDAVATSILSKRWRPIWKRAVNLESD). The region spanning 101–152 (KWKQPDFVPLSLYRSLEAFEWIGFKGREKTEKKAAFHILRNACNLKTMAITT) is the FBD domain.

The sequence is that of Putative FBD-associated F-box protein At3g12840 from Arabidopsis thaliana (Mouse-ear cress).